The chain runs to 185 residues: Ribosome-recycling factor (185 aa).

Belongs to the RRF family.

Its subcellular location is the cytoplasm. Its function is as follows. Responsible for the release of ribosomes from messenger RNA at the termination of protein biosynthesis. May increase the efficiency of translation by recycling ribosomes from one round of translation to another. This is Ribosome-recycling factor from Dehalococcoides mccartyi (strain ATCC BAA-2266 / KCTC 15142 / 195) (Dehalococcoides ethenogenes (strain 195)).